A 209-amino-acid chain; its full sequence is Bilin biosynthesis protein RpcF (209 aa).

Belongs to the CpcE/RpcE/PecE family.

In terms of biological role, an enzyme involved in the biosynthesis of bilin. Might be involved in the specific attachment of phycoerythrobilin (PEB) to the R-phycocyanin II alpha chain. The sequence is that of Bilin biosynthesis protein RpcF (rpcF) from Synechococcus sp. (strain WH8020).